An 89-amino-acid chain; its full sequence is Large ribosomal subunit protein bL28 (89 aa).

The protein belongs to the bacterial ribosomal protein bL28 family.

This chain is Large ribosomal subunit protein bL28, found in Chlamydia trachomatis serovar L2 (strain ATCC VR-902B / DSM 19102 / 434/Bu).